The chain runs to 484 residues: Threonine synthase-like 2 (484 aa).

Lys113 carries the post-translational modification N6-(pyridoxal phosphate)lysine.

This sequence belongs to the threonine synthase family. The cofactor is pyridoxal 5'-phosphate.

Acts as a catabolic phospho-lyase on both gamma- and beta-phosphorylated substrates. Degrades O-phospho-threonine (PThr) to alpha-ketobutyrate, ammonia and phosphate. This is Threonine synthase-like 2 (THNSL2) from Pongo abelii (Sumatran orangutan).